The chain runs to 460 residues: MSGKSIFDKLWDRHVITGDEGQPQLMYVDQHYIHEVTSPQAFQGLRDAGRKVRRPDLTFGTFDHNVPTVNIFDIRDAISKAQIDKLAENVIEFGIDNASHGSDKQGIVHMVGPETGRTQPGKFIVCGDSHTATHGAFGTIAFGIGTSEVEHVFATQTLWQVKPKKMLVEFTGNPQKGIYSKDYILALIAKYGVACGVGYVVEYRGEAIDRLTMEERMTICNMSIEFGSKMGIMNPDQTTYDYMRGRECVPEDFDAAVADWKTLVSDDDAEYDKVIRMDVSELAPMVTWGTNPSMGVDFDTPFPEVRDMNDERAYHYMGLRPGQKAEDINLGYIFIGSCTNARLSDLQLAARIVKGKKISPNLTAIVVPGSRPVKRAAEKIGLDKIFKDAGFEWREPGCSMCLGMNPDKVPDGVHCASTSNRNFEDRQGFGAKTHLCSPAMAAAAAISGHFVDVRRMPEVQ.

Positions 338, 398, and 401 each coordinate [4Fe-4S] cluster.

This sequence belongs to the aconitase/IPM isomerase family. LeuC type 1 subfamily. As to quaternary structure, heterodimer of LeuC and LeuD. Requires [4Fe-4S] cluster as cofactor.

It catalyses the reaction (2R,3S)-3-isopropylmalate = (2S)-2-isopropylmalate. The protein operates within amino-acid biosynthesis; L-leucine biosynthesis; L-leucine from 3-methyl-2-oxobutanoate: step 2/4. Functionally, catalyzes the isomerization between 2-isopropylmalate and 3-isopropylmalate, via the formation of 2-isopropylmaleate. The protein is 3-isopropylmalate dehydratase large subunit of Streptococcus thermophilus (strain ATCC BAA-250 / LMG 18311).